The primary structure comprises 509 residues: Glycerol kinase (509 aa).

Thr12 serves as a coordination point for ADP. Thr12, Thr13, and Ser14 together coordinate ATP. Thr12 lines the sn-glycerol 3-phosphate pocket. ADP is bound at residue Arg16. Residues Arg82, Glu83, Tyr134, and Asp245 each contribute to the sn-glycerol 3-phosphate site. The glycerol site is built by Arg82, Glu83, Tyr134, Asp245, and Gln246. The ADP site is built by Thr267 and Gly311. Thr267, Gly311, Gln315, and Gly412 together coordinate ATP. Gly412 and Asn416 together coordinate ADP.

This sequence belongs to the FGGY kinase family.

The catalysed reaction is glycerol + ATP = sn-glycerol 3-phosphate + ADP + H(+). It functions in the pathway polyol metabolism; glycerol degradation via glycerol kinase pathway; sn-glycerol 3-phosphate from glycerol: step 1/1. With respect to regulation, inhibited by fructose 1,6-bisphosphate (FBP). Functionally, key enzyme in the regulation of glycerol uptake and metabolism. Catalyzes the phosphorylation of glycerol to yield sn-glycerol 3-phosphate. This Rhizorhabdus wittichii (strain DSM 6014 / CCUG 31198 / JCM 15750 / NBRC 105917 / EY 4224 / RW1) (Sphingomonas wittichii) protein is Glycerol kinase.